A 447-amino-acid chain; its full sequence is N-succinylarginine dihydrolase (447 aa).

Substrate-binding positions include 19 to 28 (AGLSFGNEAS), Asn-110, and 137 to 138 (HR). Glu-174 is an active-site residue. Arg-214 provides a ligand contact to substrate. His-250 is a catalytic residue. Substrate-binding residues include Asp-252 and Asn-365. Residue Cys-371 is the Nucleophile of the active site.

Belongs to the succinylarginine dihydrolase family. In terms of assembly, homodimer.

The enzyme catalyses N(2)-succinyl-L-arginine + 2 H2O + 2 H(+) = N(2)-succinyl-L-ornithine + 2 NH4(+) + CO2. It functions in the pathway amino-acid degradation; L-arginine degradation via AST pathway; L-glutamate and succinate from L-arginine: step 2/5. In terms of biological role, catalyzes the hydrolysis of N(2)-succinylarginine into N(2)-succinylornithine, ammonia and CO(2). This chain is N-succinylarginine dihydrolase, found in Acinetobacter baumannii (strain SDF).